The chain runs to 448 residues: NADH oxidase (448 aa).

Residues 7-11 (GSGAA), cysteine 42, valine 80, 110-113 (ATGA), and arginine 132 each bind FAD. Cysteine 42 acts as the Redox-active in catalysis. NAD(+)-binding positions include 152–167 (VAVV…MAYG), glutamate 179, and glycine 243. Residues 271-281 (TSIPNIYAVGD), glycine 299, and threonine 300 contribute to the FAD site. Valine 328 lines the NAD(+) pocket. An FAD-binding site is contributed by tyrosine 423.

This sequence belongs to the class-III pyridine nucleotide-disulfide oxidoreductase family. FAD serves as cofactor.

It carries out the reaction 2 NADH + O2 + 2 H(+) = 2 NAD(+) + 2 H2O. Its function is as follows. Catalyzes the four-electron reduction of molecular oxygen to water. This Methanocaldococcus jannaschii (strain ATCC 43067 / DSM 2661 / JAL-1 / JCM 10045 / NBRC 100440) (Methanococcus jannaschii) protein is NADH oxidase.